The sequence spans 380 residues: Cytochrome b (380 aa).

Transmembrane regions (helical) follow at residues F33–M53, W77–I98, W113–L133, and F178–L198. The heme b site is built by H83 and H97. Heme b contacts are provided by H182 and H196. Position 201 (H201) interacts with a ubiquinone. Helical transmembrane passes span Y226–S246, L288–H308, L320–G340, and F347–P367.

Belongs to the cytochrome b family. The cytochrome bc1 complex contains 3 respiratory subunits (MT-CYB, CYC1 and UQCRFS1), 2 core proteins (UQCRC1 and UQCRC2) and probably 6 low-molecular weight proteins. Heme b serves as cofactor.

It localises to the mitochondrion inner membrane. In terms of biological role, component of the ubiquinol-cytochrome c reductase complex (complex III or cytochrome b-c1 complex) that is part of the mitochondrial respiratory chain. The b-c1 complex mediates electron transfer from ubiquinol to cytochrome c. Contributes to the generation of a proton gradient across the mitochondrial membrane that is then used for ATP synthesis. The sequence is that of Cytochrome b (mt-cyb) from Zeus faber (John Dory).